We begin with the raw amino-acid sequence, 156 residues long: Small ribosomal subunit protein uS7 (156 aa).

The protein belongs to the universal ribosomal protein uS7 family. As to quaternary structure, part of the 30S ribosomal subunit. Contacts proteins S9 and S11.

Its function is as follows. One of the primary rRNA binding proteins, it binds directly to 16S rRNA where it nucleates assembly of the head domain of the 30S subunit. Is located at the subunit interface close to the decoding center, probably blocks exit of the E-site tRNA. The polypeptide is Small ribosomal subunit protein uS7 (Hyphomonas neptunium (strain ATCC 15444)).